The sequence spans 160 residues: Lipoprotein signal peptidase (160 aa).

2 helical membrane-spanning segments follow: residues 60–80 (IEWL…AFFI) and 84–104 (LPFL…AGTV). Catalysis depends on residues Asp118 and Asp132. A helical membrane pass occupies residues 128-148 (FNIADSCLTVGVIGLLLLYIV).

This sequence belongs to the peptidase A8 family.

It is found in the cell membrane. The enzyme catalyses Release of signal peptides from bacterial membrane prolipoproteins. Hydrolyzes -Xaa-Yaa-Zaa-|-(S,diacylglyceryl)Cys-, in which Xaa is hydrophobic (preferably Leu), and Yaa (Ala or Ser) and Zaa (Gly or Ala) have small, neutral side chains.. It participates in protein modification; lipoprotein biosynthesis (signal peptide cleavage). This protein specifically catalyzes the removal of signal peptides from prolipoproteins. This chain is Lipoprotein signal peptidase, found in Dehalococcoides mccartyi (strain CBDB1).